Here is a 673-residue protein sequence, read N- to C-terminus: UvrABC system protein B (673 aa).

Residues 26 to 414 (EGLEDGLAHQ…GDEVVDQVVR (389 aa)) form the Helicase ATP-binding domain. 39–46 (GVTGSGKT) serves as a coordination point for ATP. A Beta-hairpin motif is present at residues 92–115 (YYDYYQPEAYVPSSDTFIEKDASI). The 167-residue stretch at 431–597 (QVDDLLSEIR…GLNKKVVDIL (167 aa)) folds into the Helicase C-terminal domain. A UVR domain is found at 633-668 (QQKIHELEGQMMQHAQNLEFEEAAQIRDQLHQLREL).

Belongs to the UvrB family. As to quaternary structure, forms a heterotetramer with UvrA during the search for lesions. Interacts with UvrC in an incision complex.

Its subcellular location is the cytoplasm. In terms of biological role, the UvrABC repair system catalyzes the recognition and processing of DNA lesions. A damage recognition complex composed of 2 UvrA and 2 UvrB subunits scans DNA for abnormalities. Upon binding of the UvrA(2)B(2) complex to a putative damaged site, the DNA wraps around one UvrB monomer. DNA wrap is dependent on ATP binding by UvrB and probably causes local melting of the DNA helix, facilitating insertion of UvrB beta-hairpin between the DNA strands. Then UvrB probes one DNA strand for the presence of a lesion. If a lesion is found the UvrA subunits dissociate and the UvrB-DNA preincision complex is formed. This complex is subsequently bound by UvrC and the second UvrB is released. If no lesion is found, the DNA wraps around the other UvrB subunit that will check the other stand for damage. This is UvrABC system protein B from Salmonella paratyphi A (strain ATCC 9150 / SARB42).